The chain runs to 329 residues: Lipoyl synthase (329 aa).

Residues 1 to 23 form a disordered region; it reads MTDLTATPAPAEPAASAYDPTAK. [4Fe-4S] cluster is bound by residues Cys-76, Cys-81, Cys-87, Cys-102, Cys-106, Cys-109, and Ser-316. In terms of domain architecture, Radical SAM core spans 87–305; the sequence is CFGKGTATFM…EEEAYKMGFT (219 aa).

It belongs to the radical SAM superfamily. Lipoyl synthase family. It depends on [4Fe-4S] cluster as a cofactor.

The protein resides in the cytoplasm. The enzyme catalyses [[Fe-S] cluster scaffold protein carrying a second [4Fe-4S](2+) cluster] + N(6)-octanoyl-L-lysyl-[protein] + 2 oxidized [2Fe-2S]-[ferredoxin] + 2 S-adenosyl-L-methionine + 4 H(+) = [[Fe-S] cluster scaffold protein] + N(6)-[(R)-dihydrolipoyl]-L-lysyl-[protein] + 4 Fe(3+) + 2 hydrogen sulfide + 2 5'-deoxyadenosine + 2 L-methionine + 2 reduced [2Fe-2S]-[ferredoxin]. The protein operates within protein modification; protein lipoylation via endogenous pathway; protein N(6)-(lipoyl)lysine from octanoyl-[acyl-carrier-protein]: step 2/2. Functionally, catalyzes the radical-mediated insertion of two sulfur atoms into the C-6 and C-8 positions of the octanoyl moiety bound to the lipoyl domains of lipoate-dependent enzymes, thereby converting the octanoylated domains into lipoylated derivatives. In Burkholderia pseudomallei (strain 1106a), this protein is Lipoyl synthase.